A 445-amino-acid chain; its full sequence is tRNA(Ile)-lysidine synthase (445 aa).

An ATP-binding site is contributed by 30–35; that stretch reads SGGLDS.

The protein belongs to the tRNA(Ile)-lysidine synthase family.

The protein resides in the cytoplasm. The catalysed reaction is cytidine(34) in tRNA(Ile2) + L-lysine + ATP = lysidine(34) in tRNA(Ile2) + AMP + diphosphate + H(+). Functionally, ligates lysine onto the cytidine present at position 34 of the AUA codon-specific tRNA(Ile) that contains the anticodon CAU, in an ATP-dependent manner. Cytidine is converted to lysidine, thus changing the amino acid specificity of the tRNA from methionine to isoleucine. In Alkalilimnicola ehrlichii (strain ATCC BAA-1101 / DSM 17681 / MLHE-1), this protein is tRNA(Ile)-lysidine synthase.